Here is a 310-residue protein sequence, read N- to C-terminus: Methionyl-tRNA formyltransferase (310 aa).

Position 110–113 (110–113 (SLLP)) interacts with (6S)-5,6,7,8-tetrahydrofolate.

This sequence belongs to the Fmt family.

It catalyses the reaction L-methionyl-tRNA(fMet) + (6R)-10-formyltetrahydrofolate = N-formyl-L-methionyl-tRNA(fMet) + (6S)-5,6,7,8-tetrahydrofolate + H(+). In terms of biological role, attaches a formyl group to the free amino group of methionyl-tRNA(fMet). The formyl group appears to play a dual role in the initiator identity of N-formylmethionyl-tRNA by promoting its recognition by IF2 and preventing the misappropriation of this tRNA by the elongation apparatus. The sequence is that of Methionyl-tRNA formyltransferase from Clostridium tetani (strain Massachusetts / E88).